The following is a 124-amino-acid chain: UPF0231 protein Sputcn32_0682 (124 aa).

This sequence belongs to the UPF0231 family.

The protein is UPF0231 protein Sputcn32_0682 of Shewanella putrefaciens (strain CN-32 / ATCC BAA-453).